The following is a 318-amino-acid chain: tRNA-cytidine(32) 2-sulfurtransferase (318 aa).

Residues 52–57 (SGGKDS) carry the PP-loop motif motif. [4Fe-4S] cluster is bound by residues Cys-127, Cys-130, and Cys-218.

The protein belongs to the TtcA family. As to quaternary structure, homodimer. Mg(2+) is required as a cofactor. The cofactor is [4Fe-4S] cluster.

The protein resides in the cytoplasm. The catalysed reaction is cytidine(32) in tRNA + S-sulfanyl-L-cysteinyl-[cysteine desulfurase] + AH2 + ATP = 2-thiocytidine(32) in tRNA + L-cysteinyl-[cysteine desulfurase] + A + AMP + diphosphate + H(+). The protein operates within tRNA modification. Functionally, catalyzes the ATP-dependent 2-thiolation of cytidine in position 32 of tRNA, to form 2-thiocytidine (s(2)C32). The sulfur atoms are provided by the cysteine/cysteine desulfurase (IscS) system. The sequence is that of tRNA-cytidine(32) 2-sulfurtransferase from Actinobacillus pleuropneumoniae serotype 7 (strain AP76).